Reading from the N-terminus, the 970-residue chain is Translation initiation factor IF-2 (970 aa).

Disordered regions lie at residues 54–270 (KILA…TATQ) and 328–348 (DKRRGRTPGRPMSEEQAKSLS). A compositionally biased stretch (low complexity) spans 87–96 (QEAQPVEAQP). Polar residues predominate over residues 98–112 (YEEQPSYEEQPSYEE). A compositionally biased stretch (low complexity) spans 121–149 (EVAAEAAPEPVEEPASSPEGGAPAGGAEP). Composition is skewed to pro residues over residues 150 to 160 (QPAPEAPPPSA) and 168 to 182 (PSAPPSPAVRPPAPS). The segment covering 183–253 (VPAGAQPPGA…PHGPGAQPGQ (71 aa)) has biased composition (low complexity). Residues 469-638 (IRPPVVTVMG…ALQSEVLELK (170 aa)) form the tr-type G domain. The segment at 478 to 485 (GHVDHGKT) is G1. Residue 478–485 (GHVDHGKT) coordinates GTP. The interval 503-507 (GITQH) is G2. Positions 524–527 (DTPG) are G3. GTP is bound by residues 524–528 (DTPGH) and 578–581 (NKID). Residues 578-581 (NKID) are G4. The G5 stretch occupies residues 614-616 (SAR).

Belongs to the TRAFAC class translation factor GTPase superfamily. Classic translation factor GTPase family. IF-2 subfamily.

The protein resides in the cytoplasm. One of the essential components for the initiation of protein synthesis. Protects formylmethionyl-tRNA from spontaneous hydrolysis and promotes its binding to the 30S ribosomal subunits. Also involved in the hydrolysis of GTP during the formation of the 70S ribosomal complex. The sequence is that of Translation initiation factor IF-2 from Anaeromyxobacter sp. (strain Fw109-5).